Reading from the N-terminus, the 427-residue chain is MPTPNIPSDFDFLDATLNLERLPVEELAELRKSEPIHWVDVPGGTGGFGDKGYWLVTKHADVKEVSRRSDVFGSSPDGAIPVWPQDMTREAVDLQRAVLLNMDAPQHTRLRKIISRGFTPRAIGRLEDELRSRAQKIAQTAAAQGAGDFVEQVSCELPLQAIAELLGVPQDDRDKLFRWSNEMTAGEDPEYADVDPAMSSFELISYAMKMAEERAVNPTEDIVTKLIEADIDGEKLSDDEFGFFVVMLAVAGNETTRNSITHGMIAFAQNPDQWELYKKERPETAADEIVRWATPVSAFQRTALEDVELGGVQIKKGQRVVMSYRSANFDEEVFEDPHTFNILRSPNPHVGFGGTGAHYCIGANLARMTINLIFNAIADNMPDLKPIGAPERLKSGWLNGIKHWQVDYTGAGKASVSGAPGTCPVAH.

Cys360 contacts heme.

It belongs to the cytochrome P450 family. It depends on heme as a cofactor.

The catalysed reaction is cholest-4-en-3-one + 6 reduced [2Fe-2S]-[ferredoxin] + 3 O2 + 5 H(+) = (25S)-3-oxocholest-4-en-26-oate + 6 oxidized [2Fe-2S]-[ferredoxin] + 4 H2O. It participates in steroid metabolism; cholesterol degradation. Its function is as follows. Involved in the utilization of cholesterol as the sole carbon and energy source by degrading the side chain. Primarily catalyzes the sequential oxidation of the terminal methyl of cholest-4-en-3-one into (25S)-26-hydroxycholest-4-en-3-one (alcohol), (25S)-26-oxocholest-4-en-3-one (aldehyde), to finally yield the carboxylic acid (25S)-3-oxocholest-4-en-26-oate. Also able to sequentially oxidize cholesterol itself, not only cholest-4-en-3-one. This Mycolicibacterium smegmatis (strain ATCC 700084 / mc(2)155) (Mycobacterium smegmatis) protein is Steroid C26-monooxygenase.